We begin with the raw amino-acid sequence, 377 residues long: 4-hydroxy-3-methylbut-2-en-1-yl diphosphate synthase (flavodoxin) (377 aa).

Cysteine 270, cysteine 273, cysteine 305, and glutamate 312 together coordinate [4Fe-4S] cluster.

This sequence belongs to the IspG family. [4Fe-4S] cluster serves as cofactor.

It carries out the reaction (2E)-4-hydroxy-3-methylbut-2-enyl diphosphate + oxidized [flavodoxin] + H2O + 2 H(+) = 2-C-methyl-D-erythritol 2,4-cyclic diphosphate + reduced [flavodoxin]. It functions in the pathway isoprenoid biosynthesis; isopentenyl diphosphate biosynthesis via DXP pathway; isopentenyl diphosphate from 1-deoxy-D-xylulose 5-phosphate: step 5/6. Converts 2C-methyl-D-erythritol 2,4-cyclodiphosphate (ME-2,4cPP) into 1-hydroxy-2-methyl-2-(E)-butenyl 4-diphosphate. The protein is 4-hydroxy-3-methylbut-2-en-1-yl diphosphate synthase (flavodoxin) of Bacillus subtilis (strain 168).